Consider the following 168-residue polypeptide: HTH-type transcriptional regulator IscR (168 aa).

Positions 2–131 (KLTSKGRYAV…NNITLGELMS (130 aa)) constitute an HTH rrf2-type domain. Positions 28–51 (LADISERQGISLSYLEQLFSKLRK) form a DNA-binding region, H-T-H motif. Residues Cys-92, Cys-98, and Cys-104 each contribute to the [2Fe-2S] cluster site.

[2Fe-2S] cluster is required as a cofactor.

Regulates the transcription of several operons and genes involved in the biogenesis of Fe-S clusters and Fe-S-containing proteins. The sequence is that of HTH-type transcriptional regulator IscR from Vibrio vulnificus (strain CMCP6).